The primary structure comprises 372 residues: MSAFVNIDAQRIPVALSHQPYEVVIGGEGLRGVGKELRRAGLKEGIKVLVVSNADVAEPYGDLCLQSLKESGFRPTLLVIEAGEDQKTPVSVALIHDAAYEAKLERGSLMVALGGGVVGDMTGFAAATWLRGISVVQLPTTLLAMVDAAIGGKTGVNHPGGKNLIGAFHQPRLVLIDPSTLKTLPEREFRAGMAEVIKYGVIGDSALFQLLEGIQELDTPSQLHQDLLEKILERSALAKSRVVSSDEREGGLRAILNYGHTFGHVVETLCGYGNWLHGEAVAIGMVAVGELAVLRQSWSRDDANRQKSLIAKAGLPIAWPKLDPEEVLYTLQGDKKVKDGKLRFVIPTGIGNVEIKNDVSREEIRKCLSELS.

NAD(+)-binding positions include 116-120 (GVVGD), 140-141 (TT), lysine 153, lysine 162, and 180-183 (TLKT). Zn(2+) contacts are provided by glutamate 195, histidine 260, and histidine 277.

This sequence belongs to the sugar phosphate cyclases superfamily. Dehydroquinate synthase family. NAD(+) is required as a cofactor. It depends on Co(2+) as a cofactor. Zn(2+) serves as cofactor.

The protein localises to the cytoplasm. It carries out the reaction 7-phospho-2-dehydro-3-deoxy-D-arabino-heptonate = 3-dehydroquinate + phosphate. It functions in the pathway metabolic intermediate biosynthesis; chorismate biosynthesis; chorismate from D-erythrose 4-phosphate and phosphoenolpyruvate: step 2/7. Catalyzes the conversion of 3-deoxy-D-arabino-heptulosonate 7-phosphate (DAHP) to dehydroquinate (DHQ). In Prochlorococcus marinus (strain MIT 9313), this protein is 3-dehydroquinate synthase.